The following is a 667-amino-acid chain: Holliday junction recognition protein (667 aa).

Positions 78-126 are disordered; it reads LNGQAPEGDSESSGADTSLEENWPSCSSAMREASGDPRQRQPAVPGNTL. A phosphoserine mark is found at S169, S185, and S195. Disordered regions lie at residues 181-201 and 279-317; these read ISAK…GQGP and RRRP…EPGK. The span at 279-297 shows a compositional bias: basic residues; it reads RRRPSRKQGLHKNRTHCPR. Residues S388, S424, S449, and S462 each carry the phosphoserine modification. The tract at residues 443-530 is disordered; sequence YRSGSKSPGS…NSEPTGKAVW (88 aa). Over residues 466-482 the composition is skewed to basic and acidic residues; the sequence is GREKTERPGEALEDLRG. The span at 496–515 shows a compositional bias: low complexity; sequence SCPSPEGSPSRSPSHSQLSS. K554 participates in a covalent cross-link: Glycyl lysine isopeptide (Lys-Gly) (interchain with G-Cter in SUMO2). At S567 the chain carries Phosphoserine. The disordered stretch occupies residues 596-617; it reads KRLNPDSPQQSSQKRSISPGCH. Positions 601–611 are enriched in polar residues; that stretch reads DSPQQSSQKRS. S613 is modified (phosphoserine).

In terms of assembly, interacts with CENPA (via CATD domain); the interaction is direct and specific for CENPA since it does not interact with H3.1- or H3.3-containing nucleosomes. Heterotrimer composed of HJURP, CENPA and histone H4, where HJURP interacts with the dimer formed by CENPA and histone H4 and prevents tetramerization of CENPA and H4. Identified in a centromere complex containing histones H2A, H2B and H4, and at least CENPA, CENPB, CENPC, CENPT, CENPN, HJURP, SUPT16H, SSRP1 and RSF1. Interacts with 14-3-3 family members in a phosphorylation-dependent manner. Interacts with MSH5 and NBN.

The protein localises to the nucleus. The protein resides in the nucleolus. It localises to the chromosome. It is found in the centromere. Functionally, centromeric protein that plays a central role in the incorporation and maintenance of histone H3-like variant CENPA at centromeres. Acts as a specific chaperone for CENPA and is required for the incorporation of newly synthesized CENPA molecules into nucleosomes at replicated centromeres. Prevents CENPA-H4 tetramerization and prevents premature DNA binding by the CENPA-H4 tetramer. Directly binds Holliday junctions. The sequence is that of Holliday junction recognition protein (Hjurp) from Mus musculus (Mouse).